The primary structure comprises 704 residues: Polyribonucleotide nucleotidyltransferase (704 aa).

Mg(2+) is bound by residues aspartate 487 and aspartate 493. The KH domain maps to 554–613; it reads PRLLTIKIHPDKIREVIGKGGSTIQAITKETGTQIDIQDDGTIIIASVNAIAAQAAKSRI. The 69-residue stretch at 623-691 folds into the S1 motif domain; the sequence is GRIYEGKVAK…KQGRIRLSIK (69 aa).

Belongs to the polyribonucleotide nucleotidyltransferase family. Component of the RNA degradosome, which is a multiprotein complex involved in RNA processing and mRNA degradation. Mg(2+) serves as cofactor.

It is found in the cytoplasm. It carries out the reaction RNA(n+1) + phosphate = RNA(n) + a ribonucleoside 5'-diphosphate. In terms of biological role, involved in mRNA degradation. Catalyzes the phosphorolysis of single-stranded polyribonucleotides processively in the 3'- to 5'-direction. In Xanthomonas axonopodis pv. citri (strain 306), this protein is Polyribonucleotide nucleotidyltransferase.